Consider the following 230-residue polypeptide: RING finger protein 141 (230 aa).

The segment at 154–191 (ECCICMDGRVDLILPCAHSFCQKCIDKWSDRHRSCPVC) adopts an RING-type zinc-finger fold.

The chain is RING finger protein 141 (RNF141) from Gallus gallus (Chicken).